Here is a 509-residue protein sequence, read N- to C-terminus: Putative cytochrome P450 CYP13A8 (509 aa).

Position 455 (Cys455) interacts with heme.

This sequence belongs to the cytochrome P450 family. Heme is required as a cofactor.

Functionally, cytochromes P450 are a group of heme-thiolate monooxygenases. They oxidize a variety of structurally unrelated compounds, including steroids, fatty acids, and xenobiotics. The polypeptide is Putative cytochrome P450 CYP13A8 (cyp-13A8) (Caenorhabditis elegans).